Reading from the N-terminus, the 89-residue chain is Small ribosomal subunit protein uS15 (89 aa).

Belongs to the universal ribosomal protein uS15 family. In terms of assembly, part of the 30S ribosomal subunit. Forms a bridge to the 50S subunit in the 70S ribosome, contacting the 23S rRNA.

Its function is as follows. One of the primary rRNA binding proteins, it binds directly to 16S rRNA where it helps nucleate assembly of the platform of the 30S subunit by binding and bridging several RNA helices of the 16S rRNA. In terms of biological role, forms an intersubunit bridge (bridge B4) with the 23S rRNA of the 50S subunit in the ribosome. In Shewanella sp. (strain ANA-3), this protein is Small ribosomal subunit protein uS15.